Here is a 203-residue protein sequence, read N- to C-terminus: uncharacterized protein (203 aa).

Residues 89 to 109 (CEIPFAACSVLSWSLPTIAAL) form a helical membrane-spanning segment.

The protein resides in the membrane. This is an uncharacterized protein from Saccharomyces cerevisiae (strain ATCC 204508 / S288c) (Baker's yeast).